We begin with the raw amino-acid sequence, 346 residues long: Aspartate-semialdehyde dehydrogenase (346 aa).

NADP(+) contacts are provided by residues 13 to 16 (TGAV) and 41 to 42 (RS). Phosphoserine is present on Ser98. Arg101 provides a ligand contact to phosphate. The Acyl-thioester intermediate role is filled by Cys130. A Phosphotyrosine modification is found at Tyr146. Gln157 is a substrate binding site. 160 to 161 (SG) contacts NADP(+). Lys221 contributes to the phosphate binding site. Position 243 (Arg243) interacts with substrate. His250 (proton acceptor) is an active-site residue. Asn324 contacts NADP(+).

Belongs to the aspartate-semialdehyde dehydrogenase family. As to quaternary structure, homodimer.

It catalyses the reaction L-aspartate 4-semialdehyde + phosphate + NADP(+) = 4-phospho-L-aspartate + NADPH + H(+). It participates in amino-acid biosynthesis; L-lysine biosynthesis via DAP pathway; (S)-tetrahydrodipicolinate from L-aspartate: step 2/4. The protein operates within amino-acid biosynthesis; L-methionine biosynthesis via de novo pathway; L-homoserine from L-aspartate: step 2/3. It functions in the pathway amino-acid biosynthesis; L-threonine biosynthesis; L-threonine from L-aspartate: step 2/5. Functionally, catalyzes the NADPH-dependent formation of L-aspartate-semialdehyde (L-ASA) by the reductive dephosphorylation of L-aspartyl-4-phosphate. The sequence is that of Aspartate-semialdehyde dehydrogenase from Bacillus subtilis (strain 168).